A 478-amino-acid polypeptide reads, in one-letter code: Elongation factor Tu, chloroplastic (478 aa).

A compositionally biased stretch (low complexity) spans 1 to 29 (MASISAATATSSTKLVSSNSTNPLLPSST). The disordered stretch occupies residues 1–31 (MASISAATATSSTKLVSSNSTNPLLPSSTKP). The N-terminal 69 residues, 1 to 69 (MASISAATAT…THRHRRFTVR (69 aa)), are a transit peptide targeting the chloroplast. Positions 79–283 (KPHVNIGTIG…AVDSYIPIPV (205 aa)) constitute a tr-type G domain. Residues 88-95 (GHVDHGKT) form a G1 region. 88-95 (GHVDHGKT) is a binding site for GTP. The tract at residues 129–133 (GITIN) is G2. A G3 region spans residues 150 to 153 (DCPG). GTP-binding positions include 150–154 (DCPGH) and 205–208 (NKQD). The interval 205 to 208 (NKQD) is G4. The interval 243–245 (SAL) is G5.

Belongs to the TRAFAC class translation factor GTPase superfamily. Classic translation factor GTPase family. EF-Tu/EF-1A subfamily.

It is found in the plastid. The protein resides in the chloroplast. Functionally, this protein promotes the GTP-dependent binding of aminoacyl-tRNA to the A-site of ribosomes during protein biosynthesis. In Nicotiana tabacum (Common tobacco), this protein is Elongation factor Tu, chloroplastic (TUFA).